The sequence spans 299 residues: Inosose dehydratase (299 aa).

The protein belongs to the IolE/MocC family. It depends on glutathione as a cofactor. Co(2+) is required as a cofactor. Requires Mn(2+) as cofactor.

It carries out the reaction scyllo-inosose = 3D-3,5/4-trihydroxycyclohexane-1,2-dione + H2O. Its function is as follows. Catalyzes the dehydration of inosose (2-keto-myo-inositol, 2KMI or 2,4,6/3,5-pentahydroxycyclohexanone) to 3D-(3,5/4)-trihydroxycyclohexane-1,2-dione (D-2,3-diketo-4-deoxy-epi-inositol). In Klebsiella pneumoniae (strain 342), this protein is Inosose dehydratase.